The sequence spans 192 residues: Phosphoheptose isomerase (192 aa).

In terms of domain architecture, SIS spans 37 to 192; the sequence is ITDSFKNGGK…MMLIEFEMAK (156 aa). 52 to 54 lines the substrate pocket; sequence NGG. Zn(2+)-binding residues include H61 and E65. Substrate contacts are provided by residues E65, 93-94, 119-121, S124, and Q172; these read ND and STS. The Zn(2+) site is built by Q172 and H180.

The protein belongs to the SIS family. GmhA subfamily. Homotetramer. Zn(2+) is required as a cofactor.

The protein resides in the cytoplasm. The enzyme catalyses 2 D-sedoheptulose 7-phosphate = D-glycero-alpha-D-manno-heptose 7-phosphate + D-glycero-beta-D-manno-heptose 7-phosphate. Its pathway is carbohydrate biosynthesis; D-glycero-D-manno-heptose 7-phosphate biosynthesis; D-glycero-alpha-D-manno-heptose 7-phosphate and D-glycero-beta-D-manno-heptose 7-phosphate from sedoheptulose 7-phosphate: step 1/1. In terms of biological role, catalyzes the isomerization of sedoheptulose 7-phosphate in D-glycero-D-manno-heptose 7-phosphate. The protein is Phosphoheptose isomerase of Glaesserella parasuis serovar 5 (strain SH0165) (Haemophilus parasuis).